The following is a 1412-amino-acid chain: DNA-directed RNA polymerase subunit beta' (1412 aa).

Residues aspartate 543, aspartate 545, and aspartate 547 each coordinate Mg(2+). Zn(2+) is bound by residues cysteine 1017, cysteine 1092, cysteine 1099, and cysteine 1102.

The protein belongs to the RNA polymerase beta' chain family. In terms of assembly, the RNAP catalytic core consists of 2 alpha, 1 beta, 1 beta' and 1 omega subunit. When a sigma factor is associated with the core the holoenzyme is formed, which can initiate transcription. The cofactor is Mg(2+). Zn(2+) is required as a cofactor.

The enzyme catalyses RNA(n) + a ribonucleoside 5'-triphosphate = RNA(n+1) + diphosphate. DNA-dependent RNA polymerase catalyzes the transcription of DNA into RNA using the four ribonucleoside triphosphates as substrates. In Mesomycoplasma hyopneumoniae (strain 232) (Mycoplasma hyopneumoniae), this protein is DNA-directed RNA polymerase subunit beta'.